Here is a 49-residue protein sequence, read N- to C-terminus: L-amino-acid oxidase (49 aa).

43-44 (MS) contacts FAD.

It belongs to the flavin monoamine oxidase family. FIG1 subfamily. In terms of assembly, homodimer; non-covalently linked. FAD is required as a cofactor. In terms of processing, N-glycosylated. As to expression, expressed by the venom gland.

The protein resides in the secreted. It catalyses the reaction an L-alpha-amino acid + O2 + H2O = a 2-oxocarboxylate + H2O2 + NH4(+). It carries out the reaction L-leucine + O2 + H2O = 4-methyl-2-oxopentanoate + H2O2 + NH4(+). In terms of biological role, catalyzes an oxidative deamination of predominantly hydrophobic and aromatic L-amino acids, thus producing hydrogen peroxide that may contribute to the diverse toxic effects of this enzyme. Shows activity on L-Leu. Exhibits diverse biological activities, such as hemorrhage, hemolysis, edema, antibacterial and antiparasitic activities, as well as regulation of platelet aggregation. Its effect on platelets is controversial, since it either induces aggregation or inhibits agonist-induced aggregation. These different effects are probably due to different experimental conditions. In addition, this protein induces apoptosis and necrosis and has inhibitory effects on rat kidney function (decrease of blood flow and glomerular filtration). The protein is L-amino-acid oxidase of Bothrops insularis (Golden lancehead).